Reading from the N-terminus, the 460-residue chain is G-protein coupled receptor 22 (460 aa).

Residues 1-74 (MESMPSSLTH…YPVSFQVSLT (74 aa)) lie on the Cytoplasmic side of the membrane. The chain crosses the membrane as a helical span at residues 75 to 95 (GFLMLEIVLGLSSNLTVLALY). Residues 96 to 114 (CMKSNLVSSVSNIVTMNLH) lie on the Extracellular side of the membrane. The helical transmembrane segment at 115-135 (VLDVLVCVGCIPLTIVVVLLP) threads the bilayer. Residues 136-144 (LEGNNALIC) lie on the Cytoplasmic side of the membrane. The chain crosses the membrane as a helical span at residues 145 to 165 (CFHEACVSFASVATAANVLAI). The Extracellular portion of the chain corresponds to 166–185 (TLDRYDISVRPANRVLTMGR). Residues 186-206 (AVALLGSIWALSFFSFLVPFI) form a helical membrane-spanning segment. Topologically, residues 207 to 235 (EEGFFSQAGNERNQTEAEEPSNEYYTELG) are cytoplasmic. The helical transmembrane segment at 236 to 256 (LYYHLLAQIPIFFFTAVVMLV) threads the bilayer. Residues 257 to 343 (TYYKILQALN…ERQKRVFRMS (87 aa)) are Extracellular-facing. A compositionally biased stretch (basic residues) spans 276-286 (VPKKKPRKKKT). Residues 276–309 (VPKKKPRKKKTISMTSTQPESTDASQSSAGRNAP) are disordered. The segment covering 287 to 305 (ISMTSTQPESTDASQSSAG) has biased composition (polar residues). The chain crosses the membrane as a helical span at residues 344-364 (LLIISTFLLCWTPITVLNTVI). The Cytoplasmic segment spans residues 365–377 (LSVGPSNFTVRLR). The chain crosses the membrane as a helical span at residues 378–398 (LGFLVMAYGTTIFHPLLYAFT). The Extracellular portion of the chain corresponds to 399–460 (RQKFQKVLKS…QKCLSSEDVE (62 aa)).

Belongs to the G-protein coupled receptor 1 family.

The protein localises to the cell membrane. In terms of biological role, orphan G-protein coupled receptor that regulates cilia length and structure in the Kupffer's vesicle leading to the left-right asymmetry development by establishing a directional fluid flow. The chain is G-protein coupled receptor 22 (gpr22a) from Danio rerio (Zebrafish).